The chain runs to 471 residues: Tetratricopeptide repeat protein 29 (471 aa).

7 TPR repeats span residues 92–131, 136–173, 182–215, 234–267, 274–307, 314–347, and 354–387; these read DKLP…EAAE, YEEV…AQLI, AEAE…THGR, VRTY…AREG, GEAS…STSL, GRAY…ARNN, and IRAC…AMEL. Positions 449 to 471 are disordered; sequence ATEDNIYQLPDAEEETRRSPENQ.

As to expression, expressed in spermatozoa (at protein level).

Its subcellular location is the cytoplasm. It localises to the cytoskeleton. It is found in the flagellum axoneme. Functionally, axonemal protein which is implicated in axonemal and/or peri-axonemal structure assembly and regulates flagellum assembly and beating and therefore sperm motility. This is Tetratricopeptide repeat protein 29 (Ttc29) from Mus musculus (Mouse).